We begin with the raw amino-acid sequence, 70 residues long: Conotoxin Lt11.6 (70 aa).

The first 26 residues, 1–26 (MMFRLTSVGSFLLVIVFLNLVVLTNA), serve as a signal peptide directing secretion. Cystine bridges form between cysteine 27/cysteine 41, cysteine 34/cysteine 46, cysteine 40/cysteine 50, and cysteine 45/cysteine 54. Positions 58 to 70 (AQRQKLLRSFGQR) are excised as a propeptide.

It belongs to the conotoxin I2 superfamily. As to expression, expressed by the venom duct.

The protein resides in the secreted. The chain is Conotoxin Lt11.6 from Conus litteratus (Lettered cone).